We begin with the raw amino-acid sequence, 138 residues long: Large ribosomal subunit protein uL16 (138 aa).

Belongs to the universal ribosomal protein uL16 family. Part of the 50S ribosomal subunit.

Its function is as follows. Binds 23S rRNA and is also seen to make contacts with the A and possibly P site tRNAs. The polypeptide is Large ribosomal subunit protein uL16 (Nitrosomonas europaea (strain ATCC 19718 / CIP 103999 / KCTC 2705 / NBRC 14298)).